Consider the following 188-residue polypeptide: Mitochondrial import inner membrane translocase subunit TIM23-2 (188 aa).

Transmembrane regions (helical) follow at residues 64 to 84, 112 to 131, 138 to 154, and 161 to 178; these read TGTA…ITGV, GNRI…GIVA, VWTS…VCRA, and AAVA…VVAG.

It belongs to the Tim17/Tim22/Tim23 family. As to quaternary structure, homomultimer. Component of the TIM17:23 complex at least composed of TIM23, TIM17 and TIM50. The complex interacts with the TIM44 component of the PAM complex. Also part of the NADH-ubiquinone oxidoreductase complex I. Interacts with OEP163, TIM17-2, TIM21, TIM50 and MPPA2. As to expression, expressed in roots and young cotyledons. Detected in leaves and flowers.

Its subcellular location is the mitochondrion inner membrane. Functionally, essential component of the TIM17:23 complex, a complex that mediates the translocation of transit peptide-containing proteins across the mitochondrial inner membrane. Links the inner and outer membranes. This is Mitochondrial import inner membrane translocase subunit TIM23-2 (TIM23-2) from Arabidopsis thaliana (Mouse-ear cress).